Reading from the N-terminus, the 426-residue chain is Glutamyl-tRNA reductase (426 aa).

Substrate-binding positions include 49–52 (TCNR), S109, 114–116 (EGQ), and Q120. Catalysis depends on C50, which acts as the Nucleophile. 189 to 194 (GAGKMS) lines the NADP(+) pocket.

Belongs to the glutamyl-tRNA reductase family. Homodimer.

The enzyme catalyses (S)-4-amino-5-oxopentanoate + tRNA(Glu) + NADP(+) = L-glutamyl-tRNA(Glu) + NADPH + H(+). It functions in the pathway porphyrin-containing compound metabolism; protoporphyrin-IX biosynthesis; 5-aminolevulinate from L-glutamyl-tRNA(Glu): step 1/2. It participates in porphyrin-containing compound metabolism; chlorophyll biosynthesis. Catalyzes the NADPH-dependent reduction of glutamyl-tRNA(Glu) to glutamate 1-semialdehyde (GSA). This is Glutamyl-tRNA reductase from Thermosynechococcus vestitus (strain NIES-2133 / IAM M-273 / BP-1).